The sequence spans 411 residues: Glycogen synthase kinase-3 homolog MsK-2 (411 aa).

A Protein kinase domain is found at 74–358 (YMAERAVGQG…ALEALVHPFF (285 aa)). ATP-binding positions include 80-88 (VGQGSFGVV) and Lys-103. The Proton acceptor role is filled by Asp-199. At Tyr-234 the chain carries Phosphotyrosine.

Belongs to the protein kinase superfamily. CMGC Ser/Thr protein kinase family. GSK-3 subfamily. As to expression, absent in leaves and petioles while a moderate expression is seen in the stems, roots, and nodes.

It carries out the reaction L-seryl-[protein] + ATP = O-phospho-L-seryl-[protein] + ADP + H(+). The catalysed reaction is L-threonyl-[protein] + ATP = O-phospho-L-threonyl-[protein] + ADP + H(+). In Medicago sativa (Alfalfa), this protein is Glycogen synthase kinase-3 homolog MsK-2 (MSK-2).